Reading from the N-terminus, the 311-residue chain is Methionyl-tRNA formyltransferase (311 aa).

109 to 112 contacts (6S)-5,6,7,8-tetrahydrofolate; the sequence is SLLP.

It belongs to the Fmt family.

It catalyses the reaction L-methionyl-tRNA(fMet) + (6R)-10-formyltetrahydrofolate = N-formyl-L-methionyl-tRNA(fMet) + (6S)-5,6,7,8-tetrahydrofolate + H(+). In terms of biological role, attaches a formyl group to the free amino group of methionyl-tRNA(fMet). The formyl group appears to play a dual role in the initiator identity of N-formylmethionyl-tRNA by promoting its recognition by IF2 and preventing the misappropriation of this tRNA by the elongation apparatus. This Acetivibrio thermocellus (strain ATCC 27405 / DSM 1237 / JCM 9322 / NBRC 103400 / NCIMB 10682 / NRRL B-4536 / VPI 7372) (Clostridium thermocellum) protein is Methionyl-tRNA formyltransferase.